A 382-amino-acid chain; its full sequence is Lipid-A-disaccharide synthase (382 aa).

Belongs to the LpxB family.

The catalysed reaction is 2-N,3-O-bis[(3R)-3-hydroxytetradecanoyl]-alpha-D-glucosaminyl 1-phosphate + UDP-2-N,3-O-bis[(3R)-3-hydroxytetradecanoyl]-alpha-D-glucosamine = lipid A disaccharide (E. coli) + UDP + H(+). It carries out the reaction a lipid X + a UDP-2-N,3-O-bis[(3R)-3-hydroxyacyl]-alpha-D-glucosamine = a lipid A disaccharide + UDP + H(+). It functions in the pathway glycolipid biosynthesis; lipid IV(A) biosynthesis; lipid IV(A) from (3R)-3-hydroxytetradecanoyl-[acyl-carrier-protein] and UDP-N-acetyl-alpha-D-glucosamine: step 5/6. Condensation of UDP-2,3-diacylglucosamine and 2,3-diacylglucosamine-1-phosphate to form lipid A disaccharide, a precursor of lipid A, a phosphorylated glycolipid that anchors the lipopolysaccharide to the outer membrane of the cell. This chain is Lipid-A-disaccharide synthase, found in Escherichia coli O127:H6 (strain E2348/69 / EPEC).